A 388-amino-acid chain; its full sequence is Succinate--CoA ligase [ADP-forming] subunit beta (388 aa).

Residues 9-244 (KQLFAEYGLP…PSQEDEREAH (236 aa)) form the ATP-grasp domain. ATP-binding positions include Lys46, 53–55 (GRG), Glu99, Thr102, and Glu107. 2 residues coordinate Mg(2+): Asn199 and Asp213. Substrate-binding positions include Asn264 and 321-323 (GIV).

It belongs to the succinate/malate CoA ligase beta subunit family. In terms of assembly, heterotetramer of two alpha and two beta subunits. It depends on Mg(2+) as a cofactor.

It carries out the reaction succinate + ATP + CoA = succinyl-CoA + ADP + phosphate. It catalyses the reaction GTP + succinate + CoA = succinyl-CoA + GDP + phosphate. It participates in carbohydrate metabolism; tricarboxylic acid cycle; succinate from succinyl-CoA (ligase route): step 1/1. Functionally, succinyl-CoA synthetase functions in the citric acid cycle (TCA), coupling the hydrolysis of succinyl-CoA to the synthesis of either ATP or GTP and thus represents the only step of substrate-level phosphorylation in the TCA. The beta subunit provides nucleotide specificity of the enzyme and binds the substrate succinate, while the binding sites for coenzyme A and phosphate are found in the alpha subunit. This Saccharophagus degradans (strain 2-40 / ATCC 43961 / DSM 17024) protein is Succinate--CoA ligase [ADP-forming] subunit beta.